A 107-amino-acid chain; its full sequence is Thioredoxin-1 (107 aa).

The Thioredoxin domain maps to 2–106; it reads ASVRTMTDFH…LTNMMAKLVK (105 aa). Catalysis depends on nucleophile residues C31 and C34. An intrachain disulfide couples C31 to C34.

It belongs to the thioredoxin family.

Its subcellular location is the nucleus. In terms of biological role, participates in various redox reactions through the reversible oxidation of its active center dithiol to a disulfide and catalyzes dithiol-disulfide exchange reactions. As a reducing substrate of peroxiredoxin 1, thioredoxin 2 is preferred over thioredoxin 1. Required for female meiosis and early embryonic development. The polypeptide is Thioredoxin-1 (dhd) (Drosophila yakuba (Fruit fly)).